The chain runs to 507 residues: Bifunctional purine biosynthesis protein PurH (507 aa).

The MGS-like domain maps to 1-144 (MKRALLSVSD…KNSDSVWAVV (144 aa)).

The protein belongs to the PurH family.

It carries out the reaction (6R)-10-formyltetrahydrofolate + 5-amino-1-(5-phospho-beta-D-ribosyl)imidazole-4-carboxamide = 5-formamido-1-(5-phospho-D-ribosyl)imidazole-4-carboxamide + (6S)-5,6,7,8-tetrahydrofolate. It catalyses the reaction IMP + H2O = 5-formamido-1-(5-phospho-D-ribosyl)imidazole-4-carboxamide. The protein operates within purine metabolism; IMP biosynthesis via de novo pathway; 5-formamido-1-(5-phospho-D-ribosyl)imidazole-4-carboxamide from 5-amino-1-(5-phospho-D-ribosyl)imidazole-4-carboxamide (10-formyl THF route): step 1/1. Its pathway is purine metabolism; IMP biosynthesis via de novo pathway; IMP from 5-formamido-1-(5-phospho-D-ribosyl)imidazole-4-carboxamide: step 1/1. The sequence is that of Bifunctional purine biosynthesis protein PurH from Lacticaseibacillus casei (strain BL23) (Lactobacillus casei).